The following is a 218-amino-acid chain: Probable transaldolase (218 aa).

The active-site Schiff-base intermediate with substrate is the Lys-87.

This sequence belongs to the transaldolase family. Type 3B subfamily.

The protein localises to the cytoplasm. It catalyses the reaction D-sedoheptulose 7-phosphate + D-glyceraldehyde 3-phosphate = D-erythrose 4-phosphate + beta-D-fructose 6-phosphate. The protein operates within carbohydrate degradation; pentose phosphate pathway; D-glyceraldehyde 3-phosphate and beta-D-fructose 6-phosphate from D-ribose 5-phosphate and D-xylulose 5-phosphate (non-oxidative stage): step 2/3. Its function is as follows. Transaldolase is important for the balance of metabolites in the pentose-phosphate pathway. This is Probable transaldolase from Parabacteroides distasonis (strain ATCC 8503 / DSM 20701 / CIP 104284 / JCM 5825 / NCTC 11152).